A 798-amino-acid chain; its full sequence is Disintegrin and metalloproteinase domain-containing protein B (798 aa).

Positions 1 to 23 (MKAFSCLLAVIATAASLFQHVDA) are cleaved as a signal peptide. Topologically, residues 24-706 (SHARDKLNNI…VSDWVSRHKP (683 aa)) are extracellular. N-linked (GlcNAc...) asparagine glycans are attached at residues asparagine 32, asparagine 226, asparagine 227, asparagine 313, and asparagine 407. The region spanning 271–510 (KVALIGVVAD…RTILTNCLTT (240 aa)) is the Peptidase M12B domain. Disulfide bonds link cysteine 395–cysteine 495, cysteine 448–cysteine 459, and cysteine 580–cysteine 600. Residue histidine 431 coordinates Zn(2+). Glutamate 432 is a catalytic residue. Residues histidine 435 and histidine 441 each coordinate Zn(2+). Positions 519–608 (GQQCGNGIVE…DCPHDIHSKD (90 aa)) constitute a Disintegrin domain. Residues 707–727 (IVIGVAVGAGCLLLLAIASCI) form a helical membrane-spanning segment. Residues 728–798 (CGRSRRQRPR…PGHMPPTRYA (71 aa)) are Cytoplasmic-facing. Positions 734 to 798 (QRPRNRKMPP…PGHMPPTRYA (65 aa)) are disordered. Residues 775–792 (NNIPPPINAPPPAYPGHM) are compositionally biased toward pro residues.

It depends on Zn(2+) as a cofactor.

Its subcellular location is the membrane. Its function is as follows. Probable zinc protease. This Trichophyton verrucosum (strain HKI 0517) protein is Disintegrin and metalloproteinase domain-containing protein B (ADM-B).